Here is a 147-residue protein sequence, read N- to C-terminus: Nucleoside diphosphate kinase (147 aa).

ATP contacts are provided by Lys-9, Phe-57, Arg-85, Thr-91, Arg-102, and Asn-112. The Pros-phosphohistidine intermediate role is filled by His-115.

Belongs to the NDK family. In terms of assembly, homotetramer. It depends on Mg(2+) as a cofactor.

The protein localises to the cytoplasm. The catalysed reaction is a 2'-deoxyribonucleoside 5'-diphosphate + ATP = a 2'-deoxyribonucleoside 5'-triphosphate + ADP. It carries out the reaction a ribonucleoside 5'-diphosphate + ATP = a ribonucleoside 5'-triphosphate + ADP. In terms of biological role, major role in the synthesis of nucleoside triphosphates other than ATP. The ATP gamma phosphate is transferred to the NDP beta phosphate via a ping-pong mechanism, using a phosphorylated active-site intermediate. The sequence is that of Nucleoside diphosphate kinase from Thermosipho africanus (strain TCF52B).